Consider the following 256-residue polypeptide: Ras-related protein Rab-26 (256 aa).

The tract at residues 1–51 (MSRKKTPKSKGASTPAASTLPTANGARPARSGTALSGPDAPPNGPLQPGRP) is disordered. The segment covering 12-23 (ASTPAASTLPTA) has biased composition (low complexity). Residues serine 72, glycine 73, valine 74, glycine 75, lysine 76, threonine 77, cysteine 78, serine 95, and threonine 96 each contribute to the GTP site. Threonine 77 is a binding site for Mg(2+). 2 consecutive short sequence motifs (switch) follow at residues 86-101 (GAFLAGTFISTVGIDF) and 119-136 (DTAGQERFRSVTHAYYRD). Residues threonine 96 and aspartate 119 each coordinate Mg(2+). GTP-binding residues include glycine 122, asparagine 177, lysine 178, aspartate 180, alanine 208, and lysine 209. S-geranylgeranyl cysteine attachment occurs at residues cysteine 253 and cysteine 254.

The protein belongs to the small GTPase superfamily. Rab family. Interacts with RIMS1. Interacts with ADRA2B. The cofactor is Mg(2+). As to expression, predominantly expressed in brain.

It localises to the golgi apparatus membrane. The protein localises to the cytoplasmic vesicle. The protein resides in the secretory vesicle membrane. It carries out the reaction GTP + H2O = GDP + phosphate + H(+). With respect to regulation, regulated by guanine nucleotide exchange factors (GEFs) which promote the exchange of bound GDP for free GTP. Regulated by GTPase activating proteins (GAPs) which increase the GTP hydrolysis activity. Inhibited by GDP dissociation inhibitors (GDIs). The small GTPases Rab are key regulators of intracellular membrane trafficking, from the formation of transport vesicles to their fusion with membranes. Rabs cycle between an inactive GDP-bound form and an active GTP-bound form that is able to recruit to membranes different set of downstream effectors directly responsible for vesicle formation, movement, tethering and fusion. RAB26 mediates transport of ADRA2A and ADRA2B from the Golgi to the cell membrane. Plays a role in the maturation of zymogenic granules and in pepsinogen secretion in the stomach. Plays a role in the secretion of amylase from acinar granules in the parotid gland. The chain is Ras-related protein Rab-26 from Homo sapiens (Human).